The following is a 271-amino-acid chain: 2-amino-3,7-dideoxy-D-threo-hept-6-ulosonate synthase (271 aa).

The active-site Proton acceptor is the aspartate 33. 1-deoxy-D-threo-hexo-2,5-diulose 6-phosphate-binding positions include 33 to 37 (DHGVS) and 153 to 155 (YPR). Catalysis depends on tyrosine 153, which acts as the Proton donor. Residue lysine 184 is the Schiff-base intermediate with substrate of the active site. 1-deoxy-D-threo-hexo-2,5-diulose 6-phosphate contacts are provided by residues 209-210 (GG) and 236-237 (GR).

The protein belongs to the DeoC/FbaB aldolase family. ADHS subfamily. As to quaternary structure, homodecamer.

It carries out the reaction 1-deoxy-D-threo-hexo-2,5-diulose 6-phosphate + L-aspartate 4-semialdehyde = 2,3-dioxopropyl phosphate + 2-amino-2,3,7-trideoxy-D-lyxo-hept-6-ulosonate. Catalyzes a transaldol reaction between 6-deoxy-5-ketofructose 1-phosphate (DKFP) and L-aspartate semialdehyde (ASA) with an elimination of hydroxypyruvaldehyde phosphate to yield 2-amino-3,7-dideoxy-D-threo-hept-6-ulosonate (ADH). Plays a key role in an alternative pathway of the biosynthesis of 3-dehydroquinate (DHQ), which is involved in the canonical pathway for the biosynthesis of aromatic amino acids. This Methanococcus aeolicus (strain ATCC BAA-1280 / DSM 17508 / OCM 812 / Nankai-3) protein is 2-amino-3,7-dideoxy-D-threo-hept-6-ulosonate synthase.